The following is a 157-amino-acid chain: Small ribosomal subunit protein uS7 (157 aa).

Belongs to the universal ribosomal protein uS7 family. In terms of assembly, part of the 30S ribosomal subunit. Contacts proteins S9 and S11.

One of the primary rRNA binding proteins, it binds directly to 16S rRNA where it nucleates assembly of the head domain of the 30S subunit. Is located at the subunit interface close to the decoding center, probably blocks exit of the E-site tRNA. The chain is Small ribosomal subunit protein uS7 from Koribacter versatilis (strain Ellin345).